We begin with the raw amino-acid sequence, 417 residues long: Tyrosine--tRNA ligase (417 aa).

Tyrosine 34 contacts L-tyrosine. A 'HIGH' region motif is present at residues 39–48 (PTGDSMHIGH). Residues tyrosine 165 and glutamine 169 each coordinate L-tyrosine. A 'KMSKS' region motif is present at residues 227–231 (KFGKS). An ATP-binding site is contributed by lysine 230. Residues 349–417 (ENIVLWLVDT…KKKYFLARVK (69 aa)) form the S4 RNA-binding domain.

It belongs to the class-I aminoacyl-tRNA synthetase family. TyrS type 1 subfamily. As to quaternary structure, homodimer.

It is found in the cytoplasm. The catalysed reaction is tRNA(Tyr) + L-tyrosine + ATP = L-tyrosyl-tRNA(Tyr) + AMP + diphosphate + H(+). In terms of biological role, catalyzes the attachment of tyrosine to tRNA(Tyr) in a two-step reaction: tyrosine is first activated by ATP to form Tyr-AMP and then transferred to the acceptor end of tRNA(Tyr). The sequence is that of Tyrosine--tRNA ligase from Pediococcus pentosaceus (strain ATCC 25745 / CCUG 21536 / LMG 10740 / 183-1w).